The following is a 511-amino-acid chain: GMP synthase [glutamine-hydrolyzing] (511 aa).

Residues 5–195 form the Glutamine amidotransferase type-1 domain; it reads DILVLDFGSQ…AKYACNCESV (191 aa). Cysteine 82 acts as the Nucleophile in catalysis. Catalysis depends on residues histidine 169 and glutamate 171. One can recognise a GMPS ATP-PPase domain in the interval 196 to 386; that stretch reads WNMGSFAKTQ…LGLSKEVVYR (191 aa). ATP is bound at residue 223-229; the sequence is SGGVDSS.

In terms of assembly, homodimer.

It carries out the reaction XMP + L-glutamine + ATP + H2O = GMP + L-glutamate + AMP + diphosphate + 2 H(+). It participates in purine metabolism; GMP biosynthesis; GMP from XMP (L-Gln route): step 1/1. Catalyzes the synthesis of GMP from XMP. The sequence is that of GMP synthase [glutamine-hydrolyzing] from Campylobacter jejuni subsp. doylei (strain ATCC BAA-1458 / RM4099 / 269.97).